Consider the following 160-residue polypeptide: Cytochrome b6-f complex subunit 4 (160 aa).

Helical transmembrane passes span 36–56 (LLYI…GLAV), 95–115 (LLGI…PFIE), and 128–148 (VAMT…IGAA).

This sequence belongs to the cytochrome b family. PetD subfamily. In terms of assembly, the 4 large subunits of the cytochrome b6-f complex are cytochrome b6, subunit IV (17 kDa polypeptide, PetD), cytochrome f and the Rieske protein, while the 4 small subunits are PetG, PetL, PetM and PetN. The complex functions as a dimer.

The protein resides in the cellular thylakoid membrane. Functionally, component of the cytochrome b6-f complex, which mediates electron transfer between photosystem II (PSII) and photosystem I (PSI), cyclic electron flow around PSI, and state transitions. The sequence is that of Cytochrome b6-f complex subunit 4 from Synechococcus sp. (strain CC9902).